Consider the following 374-residue polypeptide: tRNA-specific 2-thiouridylase MnmA (374 aa).

Residues 13–20 (GMSGGVDS) and Met-39 each bind ATP. An interaction with target base in tRNA region spans residues 99–101 (NPD). Cys-104 acts as the Nucleophile in catalysis. Cysteines 104 and 201 form a disulfide. ATP is bound at residue Gly-128. An interaction with tRNA region spans residues 151 to 153 (KDQ). Residue Cys-201 is the Cysteine persulfide intermediate of the active site. The interval 313-314 (RY) is interaction with tRNA.

The protein belongs to the MnmA/TRMU family.

Its subcellular location is the cytoplasm. It carries out the reaction S-sulfanyl-L-cysteinyl-[protein] + uridine(34) in tRNA + AH2 + ATP = 2-thiouridine(34) in tRNA + L-cysteinyl-[protein] + A + AMP + diphosphate + H(+). Functionally, catalyzes the 2-thiolation of uridine at the wobble position (U34) of tRNA, leading to the formation of s(2)U34. The sequence is that of tRNA-specific 2-thiouridylase MnmA from Streptococcus suis (strain 98HAH33).